We begin with the raw amino-acid sequence, 1034 residues long: Teashirt homolog 2 (1034 aa).

Residues 1–90 (MPRRKQQAPK…NESLLSDASD (90 aa)) are disordered. Residues 13–38 (AGYAQEEQLKEEEEIKEEEEEEDSGS) are a coiled coil. The segment covering 21–36 (LKEEEEIKEEEEEEDS) has biased composition (acidic residues). Over residues 65-90 (SYQNSPGSHLSNQDAENESLLSDASD) the composition is skewed to polar residues. A Glycyl lysine isopeptide (Lys-Gly) (interchain with G-Cter in SUMO2) cross-link involves residue Lys188. 2 C2H2-type zinc fingers span residues 215-239 (FRCR…ETGH) and 275-299 (LKCM…KTKH). The segment at 239–265 (HYQDDNRKKDKLRPTSYSKPRKRAFQD) is disordered. Glycyl lysine isopeptide (Lys-Gly) (interchain with G-Cter in SUMO2) cross-links involve residues Lys306 and Lys315. The segment at 380–404 (LKCMECGSSHDTLQQLTTHMMVTGH) adopts a C2H2-type 3; atypical zinc-finger fold. Residue Lys417 forms a Glycyl lysine isopeptide (Lys-Gly) (interchain with G-Cter in SUMO2) linkage. Over residues 432–455 (LSEAPNSDSLAPKPSSNSASDCTA) the composition is skewed to polar residues. A disordered region spans residues 432-496 (LSEAPNSDSL…PLQKPLDPTI (65 aa)). A compositionally biased stretch (basic and acidic residues) spans 459–482 (ELKKESKKERPEETSKDEKVVKSE). Residues Lys461, Lys480, Lys497, Lys601, and Lys652 each participate in a glycyl lysine isopeptide (Lys-Gly) (interchain with G-Cter in SUMO2) cross-link. Disordered stretches follow at residues 598–676 (TQVK…TSAL) and 763–789 (QPID…PPQK). A compositionally biased stretch (basic and acidic residues) spans 600–668 (VKKESEDKDE…KEGSEKEKPQ (69 aa)). Glycyl lysine isopeptide (Lys-Gly) (interchain with G-Cter in SUMO2) cross-links involve residues Lys800 and Lys820. The homeobox; atypical DNA-binding region spans 841-911 (RKGRQSNWNP…NVKYQLRKTG (71 aa)). The segment at 926–948 (FYCSDCASQFRTPSTYISHLESH) adopts a C2H2-type 4 zinc-finger fold. Lys966 participates in a covalent cross-link: Glycyl lysine isopeptide (Lys-Gly) (interchain with G-Cter in SUMO2). Ser980 carries the phosphoserine modification. The C2H2-type 5 zinc-finger motif lies at 994-1017 (FKCKLCCRTFVSKHAVKLHLSKTH). Residues 1014–1034 (SKTHSKSPEHHSQFVTDVDEE) form a disordered region.

It belongs to the teashirt C2H2-type zinc-finger protein family. As to quaternary structure, interacts (via homeobox domain) with APBB1 (via PID domain 1). Sumoylated. As to expression, expressed in brain; strongly reduced in post-mortem elderly subjects with Alzheimer disease.

The protein localises to the nucleus. In terms of biological role, probable transcriptional regulator involved in developmental processes. May act as a transcriptional repressor (Potential). This chain is Teashirt homolog 2 (TSHZ2), found in Homo sapiens (Human).